Here is a 99-residue protein sequence, read N- to C-terminus: Large ribosomal subunit protein uL23cz/uL23cy (99 aa).

Residues 1–37 (MGGVENPVSTDKAIRLPERKQYSSNAEPNPSKTEVKR) are disordered. The span at 12 to 21 (KAIRLPERKQ) shows a compositional bias: basic and acidic residues. The segment covering 22–32 (YSSNAEPNPSK) has biased composition (polar residues).

This sequence belongs to the universal ribosomal protein uL23 family. In terms of assembly, part of the 50S ribosomal subunit.

The protein localises to the plastid. Its subcellular location is the chloroplast. Functionally, binds to 23S rRNA. The sequence is that of Large ribosomal subunit protein uL23cz/uL23cy (rpl23-A) from Selaginella uncinata (Blue spike-moss).